We begin with the raw amino-acid sequence, 378 residues long: MTTQFSVAGVELELLRYPAQQESNLQAWDAADEHLLKSLIESEQAAVPTAIINDSFGALSCGVSKLNPSWPLCVETDARTSFLGTEQNHGRNQLPLDNLQWFTSRDTLPENLALVLMKLPKNLSYFAHQLTRLSQVLPAGTRVLVAAKAKSINGALLDIFAKHLGPASASLAWKNTRVITCVSDGKPRPLAKEVTWTVPEYQLEISNLSNVFAANKLDIGARIMLENLPKGDFKSIVDLGCGNGVLGLRTAQLFPEADIHFIDDSEMAVASAKANWARNQLPADKGHFYWDDCMTHLPEEVQPDLVLCNPPFHQGEAITDHIAWQMFLDARRRLKDGGILHIVGNRHLAYHVKLQRLFKNCTTVASNGKFVILQAQKK.

The protein belongs to the methyltransferase superfamily. RlmG family.

Its subcellular location is the cytoplasm. It catalyses the reaction guanosine(1835) in 23S rRNA + S-adenosyl-L-methionine = N(2)-methylguanosine(1835) in 23S rRNA + S-adenosyl-L-homocysteine + H(+). Specifically methylates the guanine in position 1835 (m2G1835) of 23S rRNA. This chain is Ribosomal RNA large subunit methyltransferase G, found in Shewanella baltica (strain OS195).